A 953-amino-acid chain; its full sequence is Translation initiation factor IF-2 (953 aa).

Disordered stretches follow at residues 48 to 240 (SSFS…AQQE) and 279 to 363 (TKLK…TERK). Composition is skewed to basic and acidic residues over residues 80–89 (TGSEHVEKTQ), 98–111 (FKAE…EQAA), and 140–188 (QGDK…ENHK). Residues 191–207 (RFTNQKKQGRQEPQSKS) are compositionally biased toward polar residues. Residues 229-240 (RQSETRFRAQQE) show a composition bias toward basic and acidic residues. Polar residues predominate over residues 282–291 (KSSNISAKST). Positions 300–317 (ARPEKNRELTHHSQEGQK) are enriched in basic and acidic residues. Residues 322 to 338 (SWNSQNQVRNQKNSNWN) are compositionally biased toward low complexity. The span at 339 to 348 (KNKKTKKGKN) shows a compositional bias: basic residues. The tr-type G domain occupies 454–623 (ERAPVVTIMG…LLVAEVEELK (170 aa)). Positions 463–470 (GHVDHGKT) are G1. 463 to 470 (GHVDHGKT) contacts GTP. Residues 488–492 (GITQH) form a G2 region. Residues 509–512 (DTPG) are G3. Residues 509 to 513 (DTPGH) and 563 to 566 (NKID) each bind GTP. Residues 563–566 (NKID) are G4. Residues 599–601 (SAK) form a G5 region.

It belongs to the TRAFAC class translation factor GTPase superfamily. Classic translation factor GTPase family. IF-2 subfamily.

It localises to the cytoplasm. Functionally, one of the essential components for the initiation of protein synthesis. Protects formylmethionyl-tRNA from spontaneous hydrolysis and promotes its binding to the 30S ribosomal subunits. Also involved in the hydrolysis of GTP during the formation of the 70S ribosomal complex. The sequence is that of Translation initiation factor IF-2 from Streptococcus pyogenes serotype M1.